An 802-amino-acid chain; its full sequence is Leucine--tRNA ligase (802 aa).

The 'HIGH' region signature appears at 40–51 (PYPSGAGLHVGH). A 'KMSKS' region motif is present at residues 576-580 (KMSKS). An ATP-binding site is contributed by Lys-579.

Belongs to the class-I aminoacyl-tRNA synthetase family.

The protein localises to the cytoplasm. The catalysed reaction is tRNA(Leu) + L-leucine + ATP = L-leucyl-tRNA(Leu) + AMP + diphosphate. The chain is Leucine--tRNA ligase from Bacillus cereus (strain ATCC 10987 / NRS 248).